A 497-amino-acid chain; its full sequence is Ectonucleoside triphosphate diphosphohydrolase 8 (497 aa).

Over 1–8 the chain is Cytoplasmic; the sequence is MGLSWKER. A helical membrane pass occupies residues 9 to 29; that stretch reads VFMALLGVAAASGLTMLVLIL. The Extracellular segment spans residues 30–473; that stretch reads VKAINVLLPA…AQSYSIWTAG (444 aa). A disulfide bridge links Cys78 with Cys102. Glu168 functions as the Proton acceptor in the catalytic mechanism. An intrachain disulfide couples Cys245 to Cys294. A glycan (N-linked (GlcNAc...) asparagine) is linked at Asn306. A disulfide bond links Cys331 and Cys337. Asn365 carries an N-linked (GlcNAc...) asparagine glycan. Cys383 and Cys405 are oxidised to a cystine. The chain crosses the membrane as a helical span at residues 474–494; that stretch reads VVFAVLTLVAILGAAAIQIFW. Topologically, residues 495–497 are cytoplasmic; the sequence is TQD.

This sequence belongs to the GDA1/CD39 NTPase family. Ca(2+) is required as a cofactor. It depends on Mg(2+) as a cofactor. N-glycosylated. Expressed in liver, jejunum and kidney.

The protein resides in the cell membrane. It carries out the reaction a ribonucleoside 5'-triphosphate + 2 H2O = a ribonucleoside 5'-phosphate + 2 phosphate + 2 H(+). Functionally, canalicular ectonucleoside NTPDase responsible for the main hepatic NTPDase activity. Ectonucleoside NTPDases catalyze the hydrolysis of gamma- and beta-phosphate residues of nucleotides, playing a central role in concentration of extracellular nucleotides. Has activity toward ATP, ADP, UTP and UDP, but not toward AMP. The sequence is that of Ectonucleoside triphosphate diphosphohydrolase 8 (Entpd8) from Mus musculus (Mouse).